The following is a 259-amino-acid chain: Large ribosomal subunit protein uL4 (259 aa).

Positions 47 to 67 are disordered; the sequence is WGTDPMAGKRTTAESFGSGRG.

This sequence belongs to the universal ribosomal protein uL4 family. Part of the 50S ribosomal subunit.

One of the primary rRNA binding proteins, this protein initially binds near the 5'-end of the 23S rRNA. It is important during the early stages of 50S assembly. It makes multiple contacts with different domains of the 23S rRNA in the assembled 50S subunit and ribosome. Its function is as follows. Forms part of the polypeptide exit tunnel. This chain is Large ribosomal subunit protein uL4, found in Methanosphaera stadtmanae (strain ATCC 43021 / DSM 3091 / JCM 11832 / MCB-3).